A 1486-amino-acid polypeptide reads, in one-letter code: MENETIVDNSLNNKSNVNNSNNDINNSKSNNNNTNTNYNNNHNNTTTTTTINKTEEKQNDSPKDSEFEFLDELKGVDDQHHVFSSEDESYTNGNKKRKQTDTPLSPNQDLKKRSITSPTTSPTTSTSTSTSTSTSTSTSTIINNNNNNLKDKTKEEIEFIKHIRSQLVKPKFLKDKPNFPLRSSGGNWIFVGKLPSLQSTTTDNTTLMSPNNATTTNGSSSNISTTTTTTTTTTPTTKILYRVNGFLSDNETIDSIEINFGDPRDRYEIERLHSSRINNPFELPCVSFKNPLFIKSNIAKDIGISNEYGGMNDSFEFSNQPPPPSPPPPPPPTLPPPPPPTLPPQHSLEQQSTKQQIFTQQQQQQQQQQQQQQQQQQQQQQQQQQQQQQQQQIPKINQQHYSTQPSVLIDDIYDPSNPTEPISPHQDHYPNFIFSKLQRYEHLPTRNPISQYDYRDRPRDWERDRDRDWERDRDWERDRDRERDRDRDRDWERDRDWERDRDWERDRDRDRDWERDRDRDWERDRDRDWERDRERDRDRYDRQTNFSPAPQSTTTSASTSSTTSSTDKNSNNTTSTSVSATTSTTKRKSKFSEPIEPSPFAIQIPRDNIKINGNLINNSSSSSSSGNNNNNNNNNNNNNNNNNNNNNNNNNNNNNSNNNNNNSDVKDIKDKLLKQFKIYDPVNVYMDESYWYIDFRSSESRERAIQVLNGSFIDTWKLNVDNKKTNTINEELQKQKQLENDSNNNKPNNFNLLENERSLKEICKLLVATELLSTSSKDISKNFIEAEILKTIKLLDSQRIDPLTQNSTIINNTTNTTTSNINNTSNNTTVTPIVTPKSIISAPTSRDSPRGGRSSSTTTKKPSKLDLNGSGVPPTLKKLDTIKQQQQPQPPLSPLKRPPKSHFYSDSEDDGNNNNDDDDDDDDDEDDDFDQELSPLHSSRDSKKNIKSIIKKKPIYSDDDDDHYHHHNHHHNHHHHHHHDRSEVELYNESDLQVDVLDSDNENQDESDYHKSSDNFGHVELSDDDNEFDSLDTDQDLYDTEENDNGKKSNKRPRKSKFNGKSKKPTTTTSTTTTATKSKGRSKKTTITTPTHNIPVLDEIQSNLDDEDASYVSMVMAADKDIKLLFSTKSEEGFEDSSQEILSTPTRTKPSRNRKERNLPFLDEEDDESFKQLPQPQQKQEKQEKHEHKLKNKELKQKNNEVIINKTEEHFSENLNGDNNNNNDKSENENENENENKNENENDNNNLNTSIDNINGVERRSITGCARSEGYTRSDIQKLFKRKQVAPTGKRGAASSASSGSNSSSSSTAESFETGGNLSKSARSSRFDNRGFGSDPITLASLKSRRKRIKFERSDIHDWGLFAMETISAKDMVIEYIGEVIRQKVADEREKRYVKKGIGSSYLFRVDDDTIIDATFKGNLARFINHCCDPNCIAKVLTIGNQKKIIIYAKRDINIGEEITYDYKFPIEDVKIPCLCKSPKCRQTLN.

Disordered regions lie at residues 1–64 (MENE…SPKD), 83–148 (FSSE…NNNN), 201–231 (TTDN…TTTT), 309–360 (GGMN…IFTQ), 409–429 (IDDI…QDHY), and 532–665 (DRER…NSDV). The segment covering 9–52 (NSLNNKSNVNNSNNDINNSKSNNNNTNTNYNNNHNNTTTTTTIN) has biased composition (low complexity). A compositionally biased stretch (basic and acidic residues) spans 53-64 (KTEEKQNDSPKD). The segment covering 115–148 (ITSPTTSPTTSTSTSTSTSTSTSTSTIINNNNNN) has biased composition (low complexity). Residues 201 to 210 (TTDNTTLMSP) show a composition bias toward polar residues. Low complexity predominate over residues 211 to 231 (NNATTTNGSSSNISTTTTTTT). Positions 320-343 (QPPPPSPPPPPPPTLPPPPPPTLP) are enriched in pro residues. The segment covering 347–359 (SLEQQSTKQQIFT) has biased composition (polar residues). Residues 359 to 400 (TQQQQQQQQQQQQQQQQQQQQQQQQQQQQQQQQQIPKINQQH) are a coiled coil. Basic and acidic residues predominate over residues 532-542 (DRERDRDRYDR). Composition is skewed to low complexity over residues 552–584 (STTT…TTST) and 617–663 (NNSS…NNNS). Positions 717–744 (KLNVDNKKTNTINEELQKQKQLENDSNN) form a coiled coil. Composition is skewed to low complexity over residues 812-829 (NTTN…NNTT) and 843-860 (PTSR…TTTK). 3 disordered regions span residues 812–1103 (NTTN…IQSN), 1130–1255 (SEEG…DNIN), and 1278–1327 (KLFK…SSRF). Over residues 906 to 931 (DSEDDGNNNNDDDDDDDDDEDDDFDQ) the composition is skewed to acidic residues. 2 stretches are compositionally biased toward basic residues: residues 945 to 954 (NIKSIIKKKP) and 965 to 979 (HHHN…HHHH). 2 stretches are compositionally biased toward acidic residues: residues 997–1006 (LDSDNENQDE) and 1022–1043 (SDDD…TEEN). Over residues 1048-1064 (KSNKRPRKSKFNGKSKK) the composition is skewed to basic residues. Positions 1065–1077 (PTTTTSTTTTATK) are enriched in low complexity. The segment covering 1139–1148 (QEILSTPTRT) has biased composition (polar residues). Positions 1177-1255 (QQKQEKQEKH…NLNTSIDNIN (79 aa)) form a coiled coil. Residues 1179–1199 (KQEKQEKHEHKLKNKELKQKN) show a composition bias toward basic and acidic residues. The segment covering 1213-1223 (ENLNGDNNNNN) has biased composition (low complexity). Over residues 1224 to 1240 (DKSENENENENENKNEN) the composition is skewed to basic and acidic residues. Low complexity-rich tracts occupy residues 1243–1255 (DNNN…DNIN) and 1292–1316 (GAAS…ETGG). In terms of domain architecture, SET spans 1347 to 1464 (KRIKFERSDI…IGEEITYDYK (118 aa)). Tyrosine 1463 is a binding site for S-adenosyl-L-methionine. Residues 1470-1486 (VKIPCLCKSPKCRQTLN) enclose the Post-SET domain.

It belongs to the class V-like SAM-binding methyltransferase superfamily. In terms of assembly, component of the Set1C/COMPASS complex.

Its subcellular location is the nucleus. The protein resides in the chromosome. It carries out the reaction L-lysyl(4)-[histone H3] + 3 S-adenosyl-L-methionine = N(6),N(6),N(6)-trimethyl-L-lysyl(4)-[histone H3] + 3 S-adenosyl-L-homocysteine + 3 H(+). It catalyses the reaction N(6)-methyl-L-lysyl(4)-[histone H3] + S-adenosyl-L-methionine = N(6),N(6)-dimethyl-L-lysyl(4)-[histone H3] + S-adenosyl-L-homocysteine + H(+). The enzyme catalyses N(6),N(6)-dimethyl-L-lysyl(4)-[histone H3] + S-adenosyl-L-methionine = N(6),N(6),N(6)-trimethyl-L-lysyl(4)-[histone H3] + S-adenosyl-L-homocysteine + H(+). Functionally, catalytic component of the COMPASS (Set1C) complex that specifically mono-, di- and trimethylates histone H3 to form H3K4me1/2/3. Binds RNAs which might negatively affect its histone methyltransferase activity. COMPASS recognizes ubiquitinated H2B on one face of the nucleosome which stimulates the methylation of H3 on the opposing face. May act to regulate chromatin-mediated events. In Dictyostelium discoideum (Social amoeba), this protein is Histone-lysine N-methyltransferase set1 (set1).